Consider the following 152-residue polypeptide: Neuropeptide W (152 aa).

A signal peptide spans Met-1 to Ala-32. Positions Ala-65–Glu-152 are excised as a propeptide. Disordered regions lie at residues Gly-79–Gly-108 and Ser-122–Glu-152. Positions Gly-96–Pro-106 are enriched in pro residues.

The protein belongs to the neuropeptide B/W family.

The protein resides in the secreted. Functionally, plays a regulatory role in the organization of neuroendocrine signals accessing the anterior pituitary gland. Stimulates water drinking and food intake. May play a role in the hypothalamic response to stress. The protein is Neuropeptide W (NPW) of Sus scrofa (Pig).